We begin with the raw amino-acid sequence, 217 residues long: UPF0502 protein VFMJ11_A0613 (217 aa).

It belongs to the UPF0502 family.

This is UPF0502 protein VFMJ11_A0613 from Aliivibrio fischeri (strain MJ11) (Vibrio fischeri).